We begin with the raw amino-acid sequence, 94 residues long: Phosphoribosyl-ATP pyrophosphatase (94 aa).

This sequence belongs to the PRA-PH family.

It is found in the cytoplasm. It carries out the reaction 1-(5-phospho-beta-D-ribosyl)-ATP + H2O = 1-(5-phospho-beta-D-ribosyl)-5'-AMP + diphosphate + H(+). The protein operates within amino-acid biosynthesis; L-histidine biosynthesis; L-histidine from 5-phospho-alpha-D-ribose 1-diphosphate: step 2/9. The polypeptide is Phosphoribosyl-ATP pyrophosphatase (hisE) (Saccharolobus solfataricus (strain ATCC 35092 / DSM 1617 / JCM 11322 / P2) (Sulfolobus solfataricus)).